A 244-amino-acid chain; its full sequence is Heat shock transcription factor (244 aa).

The DNA-binding element occupies 13–108; the sequence is IPKFIMKLYK…LLGFDDSLRM (96 aa). An involved in trimerization region spans residues 123–168; it reads DGSLKEIVEYLYVQNQELYTELSVCKERIERQERALNGLIEILSRV. The tract at residues 204 to 244 is disordered; the sequence is EGCEPASPPLQDKGIPELSFKPGGIPHADSDTKDDNYDPFF. The span at 231–244 shows a compositional bias: basic and acidic residues; sequence ADSDTKDDNYDPFF.

Belongs to the HSF family. In terms of assembly, homotrimer. Homotrimerization increases the affinity of HSF1 to DNA.

Its subcellular location is the nucleus. Its function is as follows. DNA-binding transcription factor that specifically binds heat shock promoter elements (HSE) and activates transcription. The polypeptide is Heat shock transcription factor (Encephalitozoon cuniculi (strain GB-M1) (Microsporidian parasite)).